Here is a 194-residue protein sequence, read N- to C-terminus: Protein GrpE (194 aa).

2 stretches are compositionally biased toward basic and acidic residues: residues 1–19 (MSKEEFPSEKNLDKEENTS) and 26–44 (KKEAAKGEETKKNNENQKL). The disordered stretch occupies residues 1 to 44 (MSKEEFPSEKNLDKEENTSKPKKAVKKEAAKGEETKKNNENQKL).

Belongs to the GrpE family. As to quaternary structure, homodimer.

It localises to the cytoplasm. Its function is as follows. Participates actively in the response to hyperosmotic and heat shock by preventing the aggregation of stress-denatured proteins, in association with DnaK and GrpE. It is the nucleotide exchange factor for DnaK and may function as a thermosensor. Unfolded proteins bind initially to DnaJ; upon interaction with the DnaJ-bound protein, DnaK hydrolyzes its bound ATP, resulting in the formation of a stable complex. GrpE releases ADP from DnaK; ATP binding to DnaK triggers the release of the substrate protein, thus completing the reaction cycle. Several rounds of ATP-dependent interactions between DnaJ, DnaK and GrpE are required for fully efficient folding. This Lactobacillus acidophilus (strain ATCC 700396 / NCK56 / N2 / NCFM) protein is Protein GrpE.